A 222-amino-acid chain; its full sequence is Cytidylate kinase (222 aa).

Residue 7-15 coordinates ATP; sequence GPSASGKSS.

The protein belongs to the cytidylate kinase family. Type 1 subfamily.

It is found in the cytoplasm. It catalyses the reaction CMP + ATP = CDP + ADP. The catalysed reaction is dCMP + ATP = dCDP + ADP. This is Cytidylate kinase from Borrelia turicatae (strain 91E135).